Here is a 776-residue protein sequence, read N- to C-terminus: MFVRFYKRLDRQYIQSQRRWILSSNKCLLQGNKNATISPLRRAFDDQDHWEESQAQNTSSEQDNKGKNSSYFWSRSKATAPQVAHTGLFQNPYLNSPEGLRKFANKSLTEATALVRNLREDSSQEGLVRYIIRLDQLSDILCRVIDLCEFLRAAHPDEQFVAAAQECHEQMFEIMNILNTDVVLCKRLKQVLSDENISSKLSSEEIRVGHILLEDFEKAGAYASPEVRKQFIQLSQNISIIGQDFINNTESLSSSYIKIPCKDLESSGTSHLVLRQLTKDTMGNNYKIPTSGYAPYTLLNACPSEAIRRQVWTAMFSCSEKQVKRLKSLLQLRRKLANIMGATDYVSYQLEGKMAKSPENVKNFLNTLVDHTKPLAAGELEELAKLKRNVENLSETNTLKLMRPWDRDYYSSLSPNFTRPNHRVDGFTSINTYFSLGVVMQGISDLFRDIYGISLKPVVAQAGETWAPDVRKLQVISETEGIIGLIYCDLLERPGKTTSPSHFTVCCSRQIYPEENDFSTIQVGENPDGSRFQMPVISLICNFRATRHGKNKSLCLLELSDVETLFHEMGHALHSMLGRTQLQNLSGTRCVTDFVELPSILMEHFAKDRRVLLRISSNYATGEPIPEELLSAFQEQNNFLKNTETFSQIKMSMLDQRLHSITDQDDIIAVYHGLEREMEVLVDDQTNWCGRFGHLFGYGASYYSYLMDRAIAAKIWDHLFKKDPFSRSSGEKFKEGVLKWGGSRDAWQCIADALDEPRLVKGDDWAMRFIGEVEDM.

Residues 1-28 constitute a mitochondrion transit peptide; that stretch reads MFVRFYKRLDRQYIQSQRRWILSSNKCL. Residues 48 to 71 are disordered; the sequence is DHWEESQAQNTSSEQDNKGKNSSY. Over residues 53 to 71 the composition is skewed to polar residues; that stretch reads SQAQNTSSEQDNKGKNSSY. Histidine 567 serves as a coordination point for Zn(2+). The active site involves glutamate 568. Positions 571 and 574 each coordinate Zn(2+).

It belongs to the peptidase M3 family. It depends on Zn(2+) as a cofactor.

Its subcellular location is the mitochondrion matrix. It catalyses the reaction Release of an N-terminal octapeptide as second stage of processing of some proteins imported into the mitochondrion.. Its function is as follows. Cleaves proteins, imported into the mitochondrion, to their mature size. While most mitochondrial precursor proteins are processed to the mature form in one step by mitochondrial processing peptidase (MPP), the sequential cleavage by MIP of an octapeptide after initial processing by MPP is a required step for a subgroup of nuclear-encoded precursor proteins destined for the matrix or the inner membrane. The protein is Mitochondrial intermediate peptidase (OCT1) of Eremothecium gossypii (strain ATCC 10895 / CBS 109.51 / FGSC 9923 / NRRL Y-1056) (Yeast).